The sequence spans 1177 residues: DNA-directed RNA polymerase subunit beta (1177 aa).

Positions 1147-1161 (DDTEIEMRDTEDDDD) are enriched in acidic residues. Residues 1147–1177 (DDTEIEMRDTEDDDDHQSADKLNVEVETTKE) are disordered. Over residues 1162-1177 (HQSADKLNVEVETTKE) the composition is skewed to basic and acidic residues.

The protein belongs to the RNA polymerase beta chain family. The RNAP catalytic core consists of 2 alpha, 1 beta, 1 beta' and 1 omega subunit. When a sigma factor is associated with the core the holoenzyme is formed, which can initiate transcription.

It catalyses the reaction RNA(n) + a ribonucleoside 5'-triphosphate = RNA(n+1) + diphosphate. In terms of biological role, DNA-dependent RNA polymerase catalyzes the transcription of DNA into RNA using the four ribonucleoside triphosphates as substrates. The sequence is that of DNA-directed RNA polymerase subunit beta from Bacillus thuringiensis (strain Al Hakam).